A 403-amino-acid chain; its full sequence is MAFLTAVLCFGFACMVQGVPSWLESRIPLLGSSVASKHPSLLDGNRHHRDMKYPFYMMQLYQNLVMANDTGLARGHNTATKEYDTVLSLFAKRCMESEKRWTLSFDMSAVSKSSELKLAELRIQLPHIEMSHNVTVDVYHTRDGEENLYLGSFEANPFSTKGSPWKVFNVTRILQHYFKEGQDIKSEYLRTKDRAERGSGMSSAEFLDSPGDSPQYNPHHTPLRRYLSTEGVMLVLFTKVKPSVNHIGFPSLIKTAESSKYVDMEKASRMPGIRRHRRNKNEKHHLSMGSIPSRHVDNGKPLCRRVDMIVNFEDIGWGNWIVYPKKYNAYRCEGACPIPLNETFKPTNHAYMKSVVKLYQPEKVECPLCVPIKMSPLSMLYYEGDEVVLRHHQEMIVEECGCS.

Residues methionine 1–glycine 18 form the signal peptide. The propeptide occupies valine 19 to arginine 278. N-linked (GlcNAc...) asparagine glycosylation is found at asparagine 68, asparagine 133, and asparagine 169. Residues alanine 195 to histidine 220 are disordered. Cystine bridges form between cysteine 303–cysteine 369, cysteine 332–cysteine 400, and cysteine 336–cysteine 402. Residue asparagine 341 is glycosylated (N-linked (GlcNAc...) asparagine).

The protein belongs to the TGF-beta family. As to quaternary structure, homodimer; disulfide-linked. Interacts with, and is inhibited by cer1 and gdf10/bmp3b.

Its subcellular location is the secreted. Cooperation and regulatory loops of multiple nodals are essential for mesendoderm patterning in early embryos. Essential for mesoderm formation and axial patterning during embryonic development. Activates the activin-like signaling pathway to induce dorsal and ventral mesoderm in animal cap ectoderm. In addition, also dorsalizes ventral marginal zone (VMZ) tissues during gastrulation. Acts in a downstream signaling cascade via cripto and cer1 to mediate cardiogenesis in embryonic mesoderm. Directs the orientation of the left-right axis by driving the left-specific gene cascade in the left lateral plate mesoderm. The sequence is that of Nodal homolog from Xenopus tropicalis (Western clawed frog).